Here is a 101-residue protein sequence, read N- to C-terminus: Small ribosomal subunit protein uS14 (101 aa).

This sequence belongs to the universal ribosomal protein uS14 family. Part of the 30S ribosomal subunit. Contacts proteins S3 and S10.

Its function is as follows. Binds 16S rRNA, required for the assembly of 30S particles and may also be responsible for determining the conformation of the 16S rRNA at the A site. The protein is Small ribosomal subunit protein uS14 of Vibrio campbellii (strain ATCC BAA-1116).